A 220-amino-acid chain; its full sequence is Phosphatidylinositol phosphate synthase (220 aa).

2 helical membrane-spanning segments follow: residues 21–46 (LLRAGFTPDTVTIFGTAASVVAALTL) and 52–72 (LFWGGMAVWLFAMFDMLDGAM). Position 29–32 (29–32 (DTVT)) interacts with a CDP-1,2-diacyl-sn-glycerol. 2 residues coordinate Mg(2+): Asp66 and Asp69. The a CDP-1,2-diacyl-sn-glycerol site is built by Gly70, Arg74, and Thr80. Mg(2+) is bound by residues Asp87 and Asp91. Asp91 acts as the Proton acceptor in catalysis. Helical transmembrane passes span 93–110 (VADGAVFAGLVWWAAFGW), 116–134 (VVATLICMITSQVISYVKA), 154–171 (LIIVLAGAIFSGGFGVQW), and 177–194 (MWVLAVASLVTVAQRMHA).

The protein belongs to the CDP-alcohol phosphatidyltransferase class-I family. Homodimer. Requires Mg(2+) as cofactor.

Its subcellular location is the cell membrane. The catalysed reaction is a CDP-1,2-diacyl-sn-glycerol + 1D-myo-inositol 3-phosphate = a 1,2-diacyl-sn-glycero-3-phospho-(1D-myo-inositol-3-phosphate) + CMP + H(+). The enzyme catalyses 1,2-di-(9Z-octadecenoyl)-sn-glycero-3-cytidine-5'-diphosphate + 1D-myo-inositol 3-phosphate = 1,2-di-(9Z-octadecenoyl)-sn-glycero-3-phospho-(1D-myo-inositol-3-phosphate) + CMP + H(+). It functions in the pathway phospholipid metabolism; phosphatidylinositol phosphate biosynthesis. Functionally, catalyzes the conjugation of the 1'-hydroxyl group of D-myo-inositol-3-phosphate (also named L-myo-inositol-1-phosphate) with a lipid tail of cytidine diphosphate diacylglycerol (CDP-DAG), forming phosphatidylinositol phosphate (PIP) and CMP. PIP is a precursor of phosphatidylinositol (PI) which is an essential lipid for mycobacteria required for formation of their cell wall. The polypeptide is Phosphatidylinositol phosphate synthase (Mycobacteroides abscessus (strain ATCC 19977 / DSM 44196 / CCUG 20993 / CIP 104536 / JCM 13569 / NCTC 13031 / TMC 1543 / L948) (Mycobacterium abscessus)).